The following is a 396-amino-acid chain: MQSLVILGATGSIGASTLNVVKCNHEQYRVFALVANTNVAKMLEICIEHRPLVAHMVNAQAATELKRLLPSELAIEVTTGEDELLSLVSCAEVDTVMAAIVGAAGLPSTLAAVKAGKRVLLANKESLVMSGQLFIEAMQSSGATVLPVDSEHNAIFQCLSERTQLEIGRCDLAGAGISHILLTGSGGPFLNSELSTLSSMTPAQACKHPNWSMGQKISVDSASMMNKGLEYIEARWLFNASAEQLKVVIHPQSVIHSMVQYRDGSVIAQLGNPDMRTPIAHCMSFPQRISSGVEPLDFFKVGQLSFLEPDFNRFPCLALAIEACKQGQEATTVLNAANEISVQAFLEGQIRFTDIAIINEQSFKHVTAQSLTTIDDIMALDSQARQYALEAVNKLK.

NADPH-binding residues include threonine 10, glycine 11, serine 12, isoleucine 13, asparagine 38, and asparagine 123. Position 124 (lysine 124) interacts with 1-deoxy-D-xylulose 5-phosphate. Glutamate 125 lines the NADPH pocket. Position 149 (aspartate 149) interacts with Mn(2+). 1-deoxy-D-xylulose 5-phosphate contacts are provided by serine 150, glutamate 151, serine 185, and histidine 208. Residue glutamate 151 coordinates Mn(2+). Glycine 214 provides a ligand contact to NADPH. 1-deoxy-D-xylulose 5-phosphate is bound by residues serine 221, asparagine 226, lysine 227, and glutamate 230. Position 230 (glutamate 230) interacts with Mn(2+).

Belongs to the DXR family. The cofactor is Mg(2+). Requires Mn(2+) as cofactor.

The catalysed reaction is 2-C-methyl-D-erythritol 4-phosphate + NADP(+) = 1-deoxy-D-xylulose 5-phosphate + NADPH + H(+). It functions in the pathway isoprenoid biosynthesis; isopentenyl diphosphate biosynthesis via DXP pathway; isopentenyl diphosphate from 1-deoxy-D-xylulose 5-phosphate: step 1/6. Its function is as follows. Catalyzes the NADPH-dependent rearrangement and reduction of 1-deoxy-D-xylulose-5-phosphate (DXP) to 2-C-methyl-D-erythritol 4-phosphate (MEP). In Shewanella piezotolerans (strain WP3 / JCM 13877), this protein is 1-deoxy-D-xylulose 5-phosphate reductoisomerase.